Consider the following 415-residue polypeptide: Squalene synthase clz20 (415 aa).

A glycan (N-linked (GlcNAc...) asparagine) is linked at N114. The chain crosses the membrane as a helical span at residues 395–415 (ADTMYLAVLVLGVFGVVAAIL).

It belongs to the phytoene/squalene synthase family. Mg(2+) serves as cofactor.

The protein resides in the membrane. It catalyses the reaction 2 (2E,6E)-farnesyl diphosphate + NADH + H(+) = squalene + 2 diphosphate + NAD(+). The enzyme catalyses 2 (2E,6E)-farnesyl diphosphate + NADPH + H(+) = squalene + 2 diphosphate + NADP(+). It participates in terpene metabolism; lanosterol biosynthesis; lanosterol from farnesyl diphosphate: step 1/3. Its function is as follows. Squalene synthase; part of the gene cluster that mediates the biosynthesis of squalestatin S1 (SQS1, also known as zaragozic acid A), a heavily oxidized fungal polyketide that offers potent cholesterol lowering activity by targeting squalene synthase (SS). Catalyzes the condensation of 2 two farnesyl pyrophosphate moieties to form squalene. The presence of a gene encoding a squalene synthase supports the identification of the cluster as being responsible for SQS1 production and suggests a likely mechanism for self-resistance. In Cochliobolus lunatus (Filamentous fungus), this protein is Squalene synthase clz20.